Here is a 591-residue protein sequence, read N- to C-terminus: Glutathione S-transferase T2 (591 aa).

Residues methionine 1–valine 82 enclose the GST N-terminal domain. Residues serine 11–glutamine 12, glutamine 40–leucine 41, lysine 53–valine 54, and glutamate 66–serine 67 contribute to the glutathione site. In terms of domain architecture, GST C-terminal spans aspartate 89 to phenylalanine 226. The segment at glutamine 229–lysine 272 is disordered. Residues lysine 243 to aspartate 262 are compositionally biased toward polar residues. Residues aspartate 265–asparagine 338 form the Myb-like domain.

This sequence belongs to the GST superfamily. Theta family.

The protein localises to the peroxisome. The catalysed reaction is RX + glutathione = an S-substituted glutathione + a halide anion + H(+). In terms of biological role, may be involved in the conjugation of reduced glutathione to a wide number of exogenous and endogenous hydrophobic electrophiles and have a detoxification role against certain herbicides. The polypeptide is Glutathione S-transferase T2 (GSTT2) (Arabidopsis thaliana (Mouse-ear cress)).